The chain runs to 60 residues: DNA-directed RNA polymerase subunit Rpo6 (60 aa).

The protein belongs to the archaeal Rpo6/eukaryotic RPB6 RNA polymerase subunit family. Part of the RNA polymerase complex.

The protein localises to the cytoplasm. It carries out the reaction RNA(n) + a ribonucleoside 5'-triphosphate = RNA(n+1) + diphosphate. Its function is as follows. DNA-dependent RNA polymerase (RNAP) catalyzes the transcription of DNA into RNA using the four ribonucleoside triphosphates as substrates. In Methanothrix thermoacetophila (strain DSM 6194 / JCM 14653 / NBRC 101360 / PT) (Methanosaeta thermophila), this protein is DNA-directed RNA polymerase subunit Rpo6.